The primary structure comprises 153 residues: Ribosome maturation factor RimP (153 aa).

It belongs to the RimP family.

Its subcellular location is the cytoplasm. Its function is as follows. Required for maturation of 30S ribosomal subunits. This Marinomonas sp. (strain MWYL1) protein is Ribosome maturation factor RimP.